The chain runs to 120 residues: T-cell receptor beta chain V region PHDS203 (120 aa).

An N-terminal signal peptide occupies residues 1–11; sequence VVLCFLGTGLV. The tract at residues 12 to 106 is v segment; sequence DMKVTQMSRY…TSVYFCAQGA (95 aa). A disulfide bridge connects residues cysteine 34 and cysteine 102. The interval 107–120 is j segment; sequence PEQYFGPGTRLTVL.

The polypeptide is T-cell receptor beta chain V region PHDS203 (Mus musculus (Mouse)).